A 460-amino-acid chain; its full sequence is tRNA modification GTPase MnmE (460 aa).

R29, E91, and K132 together coordinate (6S)-5-formyl-5,6,7,8-tetrahydrofolate. In terms of domain architecture, TrmE-type G spans 227 to 383; it reads GISIALIGKT…LIDTIIKKCG (157 aa). Position 237 (N237) interacts with K(+). GTP-binding positions include 237 to 242, 256 to 262, and 281 to 284; these read NVGKSS, TNIPGTT, and DTAG. A Mg(2+)-binding site is contributed by S241. Positions 256, 258, and 261 each coordinate K(+). A Mg(2+)-binding site is contributed by T262. K460 contributes to the (6S)-5-formyl-5,6,7,8-tetrahydrofolate binding site.

Belongs to the TRAFAC class TrmE-Era-EngA-EngB-Septin-like GTPase superfamily. TrmE GTPase family. As to quaternary structure, homodimer. Heterotetramer of two MnmE and two MnmG subunits. Requires K(+) as cofactor.

It localises to the cytoplasm. In terms of biological role, exhibits a very high intrinsic GTPase hydrolysis rate. Involved in the addition of a carboxymethylaminomethyl (cmnm) group at the wobble position (U34) of certain tRNAs, forming tRNA-cmnm(5)s(2)U34. This chain is tRNA modification GTPase MnmE, found in Prochlorococcus marinus (strain MIT 9312).